The following is a 236-amino-acid chain: Protein CUSTOS (236 aa).

2 disordered regions span residues 1-57 and 83-236; these read MSES…GTTP and VEPA…KKDE. 2 stretches are compositionally biased toward basic and acidic residues: residues 10 to 51 and 156 to 165; these read NTAR…HDGN and EKTEEKSTKE. Positions 173-181 match the Nucleolar localization signal (NLS1) motif; the sequence is KMKKKKKRK. Residues 182–196 show a composition bias toward basic and acidic residues; that stretch reads TSSEESQDKVNHQTE. Polar residues predominate over residues 197–210; sequence KQSNVEGNQEQTTA. The Nucleolar localization signal (NLS2) motif lies at 211 to 219; that stretch reads GERLKKKKK. A compositionally biased stretch (basic residues) spans 214 to 227; the sequence is LKKKKKKKKKKRKK.

This sequence belongs to the CUSTOS family. As to quaternary structure, interacts (via NLS1 and NLS2) with dvl2; the interaction is negatively regulated by Wnt stimulation. Interacts with csnk1a1. Interacts with ctnnb1; the interaction is positively regulated by Wnt stimulation. Post-translationally, phosphorylated by ck1/csnk1a1.

It localises to the nucleus envelope. Its function is as follows. Essential for Spemann-Mangold organizer formation and subsequent anterior head development in the embryo. Inhibits canonical Wnt signaling pathway by antagonizing nuclear import of beta-catenin (ctnnb1) during embryogenesis. The sequence is that of Protein CUSTOS from Danio rerio (Zebrafish).